The chain runs to 408 residues: Collagen and calcium-binding EGF domain-containing protein 1 (408 aa).

Positions 1 to 35 (MVPPPLPSRGGAAKRQLGKSLGPLLLLLALGHTWT) are cleaved as a signal peptide. The EGF-like; calcium-binding domain occupies 135-176 (DIDECATSNTTLCAHICINTMGSYHCECREGYILEDDGRTCT). 3 disulfides stabilise this stretch: cysteine 139-cysteine 151, cysteine 147-cysteine 160, and cysteine 162-cysteine 175. Asparagine 143 carries an N-linked (GlcNAc...) asparagine glycan. Residue asparagine 183 is glycosylated (N-linked (GlcNAc...) asparagine). Disordered regions lie at residues 246 to 335 (YLPG…GPPG) and 361 to 408 (HRTH…NFYP). 2 consecutive Collagen-like domains span residues 247–292 (LPGP…PMGP) and 302–335 (GRRG…GPPG). Residues 272-281 (PGMPGPPGQP) are compositionally biased toward pro residues. The segment covering 283–294 (PRGSMGPMGPSP) has biased composition (low complexity). Positions 325–334 (PGPPGSPGPP) are enriched in pro residues. An O-linked (Xyl...) (chondroitin sulfate) serine glycan is attached at serine 387. A compositionally biased stretch (basic and acidic residues) spans 390–402 (DYSRRTEARDPEA).

This sequence belongs to the CCBE1 family.

It localises to the secreted. In terms of biological role, required for lymphangioblast budding and angiogenic sprouting from venous endothelium during embryogenesis. This chain is Collagen and calcium-binding EGF domain-containing protein 1 (Ccbe1), found in Mus musculus (Mouse).